Here is a 145-residue protein sequence, read N- to C-terminus: D-aminoacyl-tRNA deacylase (145 aa).

The Gly-cisPro motif, important for rejection of L-amino acids motif lies at 137–138 (GP).

This sequence belongs to the DTD family. Homodimer.

It localises to the cytoplasm. The catalysed reaction is glycyl-tRNA(Ala) + H2O = tRNA(Ala) + glycine + H(+). It catalyses the reaction a D-aminoacyl-tRNA + H2O = a tRNA + a D-alpha-amino acid + H(+). Its function is as follows. An aminoacyl-tRNA editing enzyme that deacylates mischarged D-aminoacyl-tRNAs. Also deacylates mischarged glycyl-tRNA(Ala), protecting cells against glycine mischarging by AlaRS. Acts via tRNA-based rather than protein-based catalysis; rejects L-amino acids rather than detecting D-amino acids in the active site. By recycling D-aminoacyl-tRNA to D-amino acids and free tRNA molecules, this enzyme counteracts the toxicity associated with the formation of D-aminoacyl-tRNA entities in vivo and helps enforce protein L-homochirality. The protein is D-aminoacyl-tRNA deacylase of Shewanella denitrificans (strain OS217 / ATCC BAA-1090 / DSM 15013).